A 360-amino-acid chain; its full sequence is Phospho-N-acetylmuramoyl-pentapeptide-transferase (360 aa).

The next 10 helical transmembrane spans lie at 27–47 (GATA…IAAL), 74–94 (TMGG…WANL), 99–119 (VWVV…DDYL), 135–155 (LLLE…LGTP), 165–185 (INGF…FVIV), 199–219 (GLAI…AYLA), 236–256 (AGEL…FLWF), 263–283 (IFMG…VAVA), 288–308 (IVLA…IVQV), and 337–357 (QVVV…LSTL).

Belongs to the glycosyltransferase 4 family. MraY subfamily. It depends on Mg(2+) as a cofactor.

The protein resides in the cell inner membrane. The enzyme catalyses UDP-N-acetyl-alpha-D-muramoyl-L-alanyl-gamma-D-glutamyl-meso-2,6-diaminopimeloyl-D-alanyl-D-alanine + di-trans,octa-cis-undecaprenyl phosphate = di-trans,octa-cis-undecaprenyl diphospho-N-acetyl-alpha-D-muramoyl-L-alanyl-D-glutamyl-meso-2,6-diaminopimeloyl-D-alanyl-D-alanine + UMP. Its pathway is cell wall biogenesis; peptidoglycan biosynthesis. Its function is as follows. Catalyzes the initial step of the lipid cycle reactions in the biosynthesis of the cell wall peptidoglycan: transfers peptidoglycan precursor phospho-MurNAc-pentapeptide from UDP-MurNAc-pentapeptide onto the lipid carrier undecaprenyl phosphate, yielding undecaprenyl-pyrophosphoryl-MurNAc-pentapeptide, known as lipid I. The sequence is that of Phospho-N-acetylmuramoyl-pentapeptide-transferase from Methylocella silvestris (strain DSM 15510 / CIP 108128 / LMG 27833 / NCIMB 13906 / BL2).